Consider the following 20-residue polypeptide: uncharacterized protein (20 aa).

This is an uncharacterized protein from Escherichia coli (strain K12).